Reading from the N-terminus, the 71-residue chain is MLLLYTVMILTCIIYKLVPDNKYWPIHMFFFIMIYIVYMYEKLDIHEKSQFWNYTMARLSGHPVPTIICNC.

Residues 1–16 (MLLLYTVMILTCIIYK) lie on the Cytoplasmic side of the membrane. Residues 17–38 (LVPDNKYWPIHMFFFIMIYIVY) traverse the membrane as a helical segment. Residues 39-69 (MYEKLDIHEKSQFWNYTMARLSGHPVPTIIC) are Extracellular-facing. Asparagine 53 carries N-linked (GlcNAc...) asparagine; by host glycosylation.

This sequence belongs to the asfivirus X69R family.

The protein resides in the host membrane. This is an uncharacterized protein from African swine fever virus (isolate Pig/Kenya/KEN-50/1950) (ASFV).